Here is a 415-residue protein sequence, read N- to C-terminus: Palmitoyl-acyl carrier protein thioesterase, chloroplastic (415 aa).

Composition is skewed to low complexity over residues 1 to 16 (MVAT…LPSA) and 24 to 41 (KLGN…KSTP). The transit peptide at 1–60 (MVATAASSAFFPLPSADTSSRPGKLGNKPSSLSPLKPKSTPNGGLQVKANASAPPKINGS) directs the protein to the chloroplast. A disordered region spans residues 1–81 (MVATAASSAF…QEDAHSAPPP (81 aa)). Active-site residues include Asn314, His316, and Cys351.

Belongs to the acyl-ACP thioesterase family.

The protein resides in the plastid. It localises to the chloroplast. The catalysed reaction is hexadecanoyl-[ACP] + H2O = hexadecanoate + holo-[ACP] + H(+). Plays an essential role in chain termination during de novo fatty acid synthesis. High thioesterase activity for palmitoyl-ACP versus other acyl-ACPs. This chain is Palmitoyl-acyl carrier protein thioesterase, chloroplastic (FATB1), found in Cuphea hookeriana (Cigar plant).